The sequence spans 221 residues: GTP-binding nuclear protein Ran-2 (221 aa).

The Small GTPase Ran-type domain maps to 10–174 (DYPSFKLVIV…LYLARKLAGD (165 aa)). 21 to 28 (DGGTGKTT) contributes to the GTP binding site. Positions 40–48 (KKYEPTIGV) are switch-I. Residues glycine 71, 125 to 128 (NKVD), and 153 to 155 (SAK) contribute to the GTP site. Positions 71 to 87 (GQEKFGGLRDGYYIHGQ) are switch-II.

This sequence belongs to the small GTPase superfamily. Ran family. Found in a nuclear export complex with RanGTP, exportin and pre-miRNA.

It localises to the nucleus. Functionally, GTP-binding protein involved in nucleocytoplasmic transport. Required for the import of protein into the nucleus and also for RNA export. Involved in chromatin condensation and control of cell cycle. In Oryza sativa subsp. indica (Rice), this protein is GTP-binding nuclear protein Ran-2 (RAN2).